The sequence spans 556 residues: MPPERRRRMKLDRRTGAKPKRKPGMRPDWKAGAGPGGPPQKPAPSSQRKPPARPSAAAAAIAVAAAEEERRLRQRNRLRLEEDKPAVERCLEELVFGDVENDEDALLRRLRGPRVQEHEDSGDSEVENEAKGNFPPQKKPVWVDEEDEDEEMVDMMNNRFRKDMMKNASESKLSKDNLKKRLKEEFQHAMGGVPAWAETTKRKTSSDDESEEDEDDLLQRTGNFISTSTSLPRGILKMKNCQHANAERPTVARISSVQFHPGAQIVMVAGLDNAVSLFQVDGKTNPKIQSIYLERFPIFKACFSANGEEVLATSTHSKVLYVYDMLAGKLIPVHQVRGLKEKIVRSFEVSPDGSFLLINGIAGYLHLLAMKTKELIGSMKINGRVAASTFSSDSKKVYASSGDGEVYVWDVNSRKCLNRFVDEGSLYGLSIATSRNGQYVACGSNCGVVNIYNQDSCLQETNPKPIKAIMNLVTGVTSLTFNPTTEILAIASEKMKEAVRLVHLPSCTVFSNFPVIKNKNISHVHTMDFSPRSGYFALGNEKGKALMYRLHHYSDF.

The span at 1 to 24 shows a compositional bias: basic residues; that stretch reads MPPERRRRMKLDRRTGAKPKRKPG. The tract at residues 1–70 is disordered; the sequence is MPPERRRRMK…IAVAAAEEER (70 aa). A compositionally biased stretch (low complexity) spans 43-65; the sequence is APSSQRKPPARPSAAAAAIAVAA. A Glycyl lysine isopeptide (Lys-Gly) (interchain with G-Cter in SUMO2) cross-link involves residue Lys-84. The interval 111–143 is disordered; that stretch reads RGPRVQEHEDSGDSEVENEAKGNFPPQKKPVWV. Phosphoserine occurs at positions 121 and 124. Residues Lys-183 and Lys-201 each participate in a glycyl lysine isopeptide (Lys-Gly) (interchain with G-Cter in SUMO2) cross-link. Residues 193-219 form a disordered region; it reads VPAWAETTKRKTSSDDESEEDEDDLLQ. Residue Thr-204 is modified to Phosphothreonine. Residues Ser-205, Ser-206, and Ser-210 each carry the phosphoserine modification. Over residues 207–216 the composition is skewed to acidic residues; sequence DDESEEDEDD. Thr-221 is subject to Phosphothreonine. WD repeat units lie at residues 249–288, 293–333, 339–380, 381–419, 421–462, and 471–512; these read PTVARISSVQFHPGAQIVMVAGLDNAVSLFQVDGKTNPKI, LERF…LIPV, LKEK…GSMK, INGRVAASTFSSDSKKVYASSGDGEVYVWDVNSRKCLNR, VDEG…QETN, and NLVT…VFSN. A Glycyl lysine isopeptide (Lys-Gly) (interchain with G-Cter in SUMO2) cross-link involves residue Lys-517.

Belongs to the WD repeat UTP18 family. In terms of assembly, part of the small subunit (SSU) processome, composed of more than 70 proteins and the RNA chaperone small nucleolar RNA (snoRNA) U3.

The protein resides in the nucleus. It is found in the nucleolus. In terms of biological role, part of the small subunit (SSU) processome, first precursor of the small eukaryotic ribosomal subunit. During the assembly of the SSU processome in the nucleolus, many ribosome biogenesis factors, an RNA chaperone and ribosomal proteins associate with the nascent pre-rRNA and work in concert to generate RNA folding, modifications, rearrangements and cleavage as well as targeted degradation of pre-ribosomal RNA by the RNA exosome. Involved in nucleolar processing of pre-18S ribosomal RNA. The chain is U3 small nucleolar RNA-associated protein 18 homolog from Homo sapiens (Human).